The following is a 360-amino-acid chain: uncharacterized protein (360 aa).

The ABC transporter domain maps to 4–235; it reads LSLQHIQKIY…PANMFVAGFI (232 aa). 37 to 44 lines the ATP pocket; the sequence is GPSGCGKS.

The protein belongs to the ABC transporter superfamily.

This is an uncharacterized protein from Escherichia coli O157:H7.